Consider the following 199-residue polypeptide: Peroxiredoxin-1 (199 aa).

S2 carries the post-translational modification N-acetylserine. A Thioredoxin domain is found at 6-165; sequence AKIGHPAPNF…TLRLVQAFQF (160 aa). K7 carries the N6-acetyllysine; alternate modification. K7 is covalently cross-linked (Glycyl lysine isopeptide (Lys-Gly) (interchain with G-Cter in SUMO2); alternate). K16 and K27 each carry N6-acetyllysine. A Phosphoserine modification is found at S32. K35 is subject to N6-acetyllysine; alternate. An N6-succinyllysine; alternate modification is found at K35. C52 serves as the catalytic Cysteine sulfenic acid (-SOH) intermediate. T90 carries the phosphothreonine modification. Residue K120 forms a Glycyl lysine isopeptide (Lys-Gly) (interchain with G-Cter in SUMO2) linkage. K136 is subject to N6-acetyllysine. The disordered stretch occupies residues 176 to 199; it reads GWKPGSDTIKPDVQKSKEYFSKQK. The span at 184–199 shows a compositional bias: basic and acidic residues; it reads IKPDVQKSKEYFSKQK. Residue K185 forms a Glycyl lysine isopeptide (Lys-Gly) (interchain with G-Cter in SUMO1) linkage. At K197 the chain carries N6-acetyllysine.

It belongs to the peroxiredoxin family. AhpC/Prx1 subfamily. Homodimer; disulfide-linked, upon oxidation. 5 homodimers assemble to form a ring-like decamer. Interacts with GDPD5; forms a mixed-disulfide with GDPD5. Interacts with SESN1 and SESN2. Interacts with FAM107A. Post-translationally, phosphorylated on Thr-90 during the M-phase, which leads to a decrease in enzymatic activity. In terms of processing, acetylation increases reducing activity and resistance to superoxidation. Deacetylated by HDAC6 which decreases reducing activity. Detected in heart and skeletal muscle (at protein level).

Its subcellular location is the cytoplasm. It catalyses the reaction a hydroperoxide + [thioredoxin]-dithiol = an alcohol + [thioredoxin]-disulfide + H2O. Its function is as follows. Thiol-specific peroxidase that catalyzes the reduction of hydrogen peroxide and organic hydroperoxides to water and alcohols, respectively. Plays a role in cell protection against oxidative stress by detoxifying peroxides and as sensor of hydrogen peroxide-mediated signaling events. Might participate in the signaling cascades of growth factors and tumor necrosis factor-alpha by regulating the intracellular concentrations of H(2)O(2). Reduces an intramolecular disulfide bond in GDPD5 that gates the ability to GDPD5 to drive postmitotic motor neuron differentiation. This is Peroxiredoxin-1 (PRDX1) from Myotis lucifugus (Little brown bat).